A 20-amino-acid chain; its full sequence is Haemoporin (20 aa).

The tract at residues 1-20 (AAVPEAAAEATAEAAPVSEF) is disordered.

In terms of assembly, homopentamer. Forms a cylindrical structure with a central pore. In terms of tissue distribution, detected in the hemolymph.

It localises to the secreted. The sequence is that of Haemoporin from Aplysia californica (California sea hare).